A 215-amino-acid chain; its full sequence is uncharacterized protein (215 aa).

The next 6 membrane-spanning stretches (helical) occupy residues 21–40, 50–69, 95–117, 122–144, 156–178, and 183–205; these read IIKY…VLIN, LIFS…SVIF, FFAI…YVLF, LEII…LVVL, ANFV…GLIL, and LQLI…FLSS.

Belongs to the CcmB/CycW/HelB family.

The protein localises to the cell membrane. This is an uncharacterized protein from Rickettsia conorii (strain ATCC VR-613 / Malish 7).